The sequence spans 89 residues: Small ribosomal subunit protein uS17 (89 aa).

This sequence belongs to the universal ribosomal protein uS17 family. As to quaternary structure, part of the 30S ribosomal subunit.

One of the primary rRNA binding proteins, it binds specifically to the 5'-end of 16S ribosomal RNA. The sequence is that of Small ribosomal subunit protein uS17 from Xylella fastidiosa (strain M12).